The sequence spans 257 residues: Flap endonuclease Xni (257 aa).

Residue Asp109 participates in Mg(2+) binding. In terms of domain architecture, 5'-3' exonuclease spans Val165–Glu254. The K(+) site is built by Leu176, Pro185, Ile187, and Ile190. The segment at Gly189–Ala194 is interaction with DNA.

The protein belongs to the Xni family. Mg(2+) serves as cofactor. Requires K(+) as cofactor.

Its function is as follows. Has flap endonuclease activity. During DNA replication, flap endonucleases cleave the 5'-overhanging flap structure that is generated by displacement synthesis when DNA polymerase encounters the 5'-end of a downstream Okazaki fragment. This Vibrio atlanticus (strain LGP32) (Vibrio splendidus (strain Mel32)) protein is Flap endonuclease Xni.